The chain runs to 404 residues: Dihydrosphingosine 1-phosphate phosphatase YSR3 (404 aa).

The Lumenal portion of the chain corresponds to Met-1–Thr-86. The N-linked (GlcNAc...) asparagine glycan is linked to Asn-62. A helical transmembrane segment spans residues Ser-87 to Tyr-107. Residues Arg-108–Asp-113 lie on the Cytoplasmic side of the membrane. The helical transmembrane segment at Met-114 to Leu-134 threads the bilayer. The interval Lys-129–Pro-137 is phosphatase sequence motif I. Residues Pro-135–Glu-154 are Lumenal-facing. The chain crosses the membrane as a helical span at residues Tyr-155–Ile-176. The interval Pro-158 to His-161 is phosphatase sequence motif II. The active-site Proton donor is the His-161. At Cys-177–Leu-182 the chain is on the cytoplasmic side. A helical membrane pass occupies residues Val-183–Phe-203. Residues Gly-204–Asp-215 lie on the Lumenal side of the membrane. Positions Gly-204–Asp-215 are phosphatase sequence motif III. The active-site Nucleophile is the His-211. The helical transmembrane segment at Leu-216 to Ala-236 threads the bilayer. Residues Leu-237–Gln-241 lie on the Cytoplasmic side of the membrane. The helical transmembrane segment at Ile-242–Asn-262 threads the bilayer. The Lumenal portion of the chain corresponds to His-263–Gly-319. Residues Val-320–Ile-340 form a helical membrane-spanning segment. Topologically, residues Lys-341–Arg-379 are cytoplasmic. Residues Phe-380–Trp-400 traverse the membrane as a helical segment. The Lumenal portion of the chain corresponds to Thr-401–Arg-404.

It belongs to the type 2 lipid phosphate phosphatase family.

The protein resides in the endoplasmic reticulum membrane. The enzyme catalyses sphinganine 1-phosphate + H2O = sphinganine + phosphate. Dihydrosphingosine 1-phosphate phosphatase required for efficient ceramide synthesis from exogenous sphingoid bases. Involved in endocytosis and calcium-mediated signaling. The protein is Dihydrosphingosine 1-phosphate phosphatase YSR3 of Saccharomyces cerevisiae (strain ATCC 204508 / S288c) (Baker's yeast).